Reading from the N-terminus, the 538-residue chain is ESX-3 secretion system ATPase EccB3 (538 aa).

Basic and acidic residues predominate over residues 1–16 (MTNQQHDHDFDHDRRS). The tract at residues 1–25 (MTNQQHDHDFDHDRRSFASRTPVNN) is disordered. Residues 75–95 (VLMGVLIVITGLIGSFVFSLI) form a helical membrane-spanning segment.

The protein belongs to the EccB family. In terms of assembly, part of the ESX-3 / type VII secretion system (T7SS), which is composed of cytosolic and membrane components. The ESX-3 membrane complex is composed of EccB3, EccC3, EccD3 and EccE3.

It is found in the cell inner membrane. An ATPase. Part of the ESX-3 specialized secretion system, which is important for iron and zinc uptake or homeostasis. This Mycobacterium tuberculosis (strain CDC 1551 / Oshkosh) protein is ESX-3 secretion system ATPase EccB3.